Here is a 213-residue protein sequence, read N- to C-terminus: MDNKRKLLKIITIGDRMVGKLSIIKNYMGRPFFQWGNSIPFDFHFKEIIIDNETVSLQLWNTHGSAYEDSKIYYRDVDCCVVCFNIHNEQSFNNLIYWIKELEANTLVDEKVPFVLIGTKSDIERTEKSISKERIEQWCKQIEDQGIVKEKIHYFETSAKLSTNIIEAYETIVKIALNQYKNKQKNSINISIEPEKPKGIFQIMIFMGVVFYF.

Glycine 14 to leucine 21 serves as a coordination point for GTP. An Effector region motif is present at residues glycine 36 to phenylalanine 43. GTP-binding positions include asparagine 61–serine 65 and threonine 119–aspartate 122.

Belongs to the small GTPase superfamily. Rab family.

This is Ras-related protein RabK1 (rabK1) from Dictyostelium discoideum (Social amoeba).